Reading from the N-terminus, the 520-residue chain is NADH-quinone oxidoreductase subunit N (520 aa).

A run of 14 helical transmembrane segments spans residues 13 to 33 (ALLP…ASVW), 55 to 75 (FGVI…GDGA), 87 to 107 (GFRW…LMLL), 115 to 135 (AAFG…MMVL), 141 to 161 (LMFV…LAGV), 176 to 196 (FLLG…LFGA), 219 to 239 (FMSG…AAPF), 250 to 270 (APLP…FAVF), 285 to 305 (WHMG…VFAL), 313 to 333 (MLAY…IVGD), 339 to 359 (ALIF…GVLI), 383 to 403 (WLAI…VLGG), 425 to 445 (ILAV…LAVV), and 468 to 488 (SLIA…TPIM). Residues 494–508 (ATTTTSPTSNPAAPR) show a composition bias toward low complexity. The interval 494–520 (ATTTTSPTSNPAAPRGEVRLQTASVPR) is disordered.

This sequence belongs to the complex I subunit 2 family. NDH-1 is composed of 14 different subunits. Subunits NuoA, H, J, K, L, M, N constitute the membrane sector of the complex.

The protein localises to the cell inner membrane. The enzyme catalyses a quinone + NADH + 5 H(+)(in) = a quinol + NAD(+) + 4 H(+)(out). Its function is as follows. NDH-1 shuttles electrons from NADH, via FMN and iron-sulfur (Fe-S) centers, to quinones in the respiratory chain. The immediate electron acceptor for the enzyme in this species is believed to be ubiquinone. Couples the redox reaction to proton translocation (for every two electrons transferred, four hydrogen ions are translocated across the cytoplasmic membrane), and thus conserves the redox energy in a proton gradient. This chain is NADH-quinone oxidoreductase subunit N, found in Gemmatimonas aurantiaca (strain DSM 14586 / JCM 11422 / NBRC 100505 / T-27).